Consider the following 231-residue polypeptide: MAKLTKRQKAIAEKVVAGKQYSFEEAAKLLAELSTIKFKESVDVAVNLGVDPRKSDQVVRGATVLPNGTGKSVRVAVFTQGPAAEAALAAGADKVGMDELAAEMKGGDLNYDVVIASPDAMRVVGQLGQILGPRGLMPNPKVGTVTPDVATAVKNAKAGQVRFRTDKNGIIHSSVGKVDFEPAKLQQNVEALLADLKRLKPSSSKGVYVKRVTLSTTMGPGLQIDLASLEA.

This sequence belongs to the universal ribosomal protein uL1 family. In terms of assembly, part of the 50S ribosomal subunit.

Functionally, binds directly to 23S rRNA. The L1 stalk is quite mobile in the ribosome, and is involved in E site tRNA release. In terms of biological role, protein L1 is also a translational repressor protein, it controls the translation of the L11 operon by binding to its mRNA. The sequence is that of Large ribosomal subunit protein uL1 from Pseudomonas aeruginosa (strain LESB58).